A 219-amino-acid polypeptide reads, in one-letter code: Germin-like protein subfamily 2 member 1 (219 aa).

The N-terminal stretch at 1-21 is a signal peptide; it reads MASPTLTLLLLLTTVSFFISS. A disulfide bridge connects residues Cys32 and Cys47. The Cupin type-1 domain occupies 61 to 209; that stretch reads QGLAKPGLTN…AFQTSPGTVK (149 aa). The N-linked (GlcNAc...) asparagine glycan is linked to Asn70. Mn(2+) contacts are provided by His109, His111, Glu116, and His155.

Belongs to the germin family. In terms of assembly, oligomer (believed to be a pentamer but probably hexamer).

It localises to the secreted. The protein resides in the extracellular space. Its subcellular location is the apoplast. May play a role in plant defense. Probably has no oxalate oxidase activity even if the active site is conserved. The protein is Germin-like protein subfamily 2 member 1 (GLP4) of Arabidopsis thaliana (Mouse-ear cress).